Here is a 71-residue protein sequence, read N- to C-terminus: Large ribosomal subunit protein bL31 (71 aa).

Zn(2+) is bound by residues Cys-16, Cys-18, Cys-37, and Cys-40.

This sequence belongs to the bacterial ribosomal protein bL31 family. Type A subfamily. As to quaternary structure, part of the 50S ribosomal subunit. It depends on Zn(2+) as a cofactor.

Its function is as follows. Binds the 23S rRNA. The protein is Large ribosomal subunit protein bL31 of Solidesulfovibrio magneticus (strain ATCC 700980 / DSM 13731 / RS-1) (Desulfovibrio magneticus).